A 145-amino-acid polypeptide reads, in one-letter code: Small ribosomal subunit protein uS12 (145 aa).

The protein belongs to the universal ribosomal protein uS12 family. Part of the 30S ribosomal subunit.

In terms of biological role, with S4 and S5 plays an important role in translational accuracy. Located at the interface of the 30S and 50S subunits. This Cenarchaeum symbiosum (strain A) protein is Small ribosomal subunit protein uS12.